Reading from the N-terminus, the 188-residue chain is Inner kinetochore subunit cnl2 (188 aa).

This sequence belongs to the NKP2 family. In terms of assembly, component of the inner kinetochore constitutive centromere-associated network (CCAN) (also known as central kinetochore Sim4 complex in fission yeast), which is composed of at least cnl2, cnp3, cnp20, fta1, fta2, fta3, fta4, fta6, fta7, mal2, mhf1, mhf2, mis6, mis15, mis17, sim4 and wip1.

Its subcellular location is the cytoplasm. It is found in the nucleus. The protein localises to the chromosome. It localises to the centromere. The protein resides in the kinetochore. Its function is as follows. Component of the kinetochore, a multiprotein complex that assembles on centromeric DNA and attaches chromosomes to spindle microtubules, mediating chromosome segregation and sister chromatid segregation during meiosis and mitosis. Component of the inner kinetochore constitutive centromere-associated network (CCAN), which serves as a structural platform for outer kinetochore assembly. The chain is Inner kinetochore subunit cnl2 (cnl2) from Schizosaccharomyces pombe (strain 972 / ATCC 24843) (Fission yeast).